A 365-amino-acid polypeptide reads, in one-letter code: GTPase Obg (365 aa).

Residues 1 to 177 (MFTDYVRILA…GQFLLELKTI (177 aa)) enclose the Obg domain. Residues 64-85 (QFAEDGQPGKGQKRKGRDGKNL) form a disordered region. The OBG-type G domain occupies 178-348 (ADVGFVGLPN…FLNSCRKSFE (171 aa)). GTP is bound by residues 184 to 191 (GLPNSGKS), 209 to 213 (FTTLK), 231 to 234 (DIPG), 300 to 303 (NKVD), and 329 to 331 (SAL). Mg(2+) is bound by residues Ser191 and Thr211.

Belongs to the TRAFAC class OBG-HflX-like GTPase superfamily. OBG GTPase family. As to quaternary structure, monomer. It depends on Mg(2+) as a cofactor.

The protein localises to the cytoplasm. In terms of biological role, an essential GTPase which binds GTP, GDP and possibly (p)ppGpp with moderate affinity, with high nucleotide exchange rates and a fairly low GTP hydrolysis rate. Plays a role in control of the cell cycle, stress response, ribosome biogenesis and in those bacteria that undergo differentiation, in morphogenesis control. This Methylacidiphilum infernorum (isolate V4) (Methylokorus infernorum (strain V4)) protein is GTPase Obg.